A 334-amino-acid polypeptide reads, in one-letter code: MEKATLNSIQKSVWEGQIPLKIVLAPSESRTYDQTDPYLISYPRISYLPSLLPRLKAFFSSSLIDPTASQPHDGWFSFEGVPLKWHYPVGLLYDLYAGAEPATKSSETEALDDEQLPWRLVVHFGDWPDAELVRLDAQGTVMHDAFINSVKEADFVRNGTAKGIMTLSKDDSSGLWKAVQDVDLPSFQRIMNILLPPNPHQPLRNLPVRLFLPLPPKPDSNSDSPFLKVVQSPIPPTISTTPSQLQRQMAQSTLSSSGVSGSSPGAAQPQPQTQTIGTALHSILPNLFPSRRTPVIAKPVLHGAQVPMSAPVEEVVRAAAYGDGWVYIVIRMMG.

K151 is covalently cross-linked (Glycyl lysine isopeptide (Lys-Gly) (interchain with G-Cter in ATG12)). The interval 237–272 is disordered; the sequence is TISTTPSQLQRQMAQSTLSSSGVSGSSPGAAQPQPQ. Residues 252–272 are compositionally biased toward low complexity; the sequence is STLSSSGVSGSSPGAAQPQPQ.

It belongs to the ATG5 family. As to quaternary structure, conjugated with atg12. Conjugated to atg12; which is essential for autophagy.

The protein localises to the preautophagosomal structure membrane. In terms of biological role, involved in cytoplasm to vacuole transport (Cvt) and autophagic vesicle formation. Autophagy is essential for maintenance of amino acid levels and protein synthesis under nitrogen starvation. Required for selective autophagic degradation of the nucleus (nucleophagy). Also required for mitophagy, which eliminates defective or superfluous mitochondria in order to fulfill cellular energy requirements and prevent excess ROS production. Conjugation with atg12, through a ubiquitin-like conjugating system involving atg7 as an E1-like activating enzyme and atg10 as an E2-like conjugating enzyme, is essential for its function. The atg12-atg5 conjugate acts as an E3-like enzyme which is required for lipidation of atg8 and atg8 association to the vesicle membranes. The polypeptide is Autophagy protein 5 (atg5) (Emericella nidulans (strain FGSC A4 / ATCC 38163 / CBS 112.46 / NRRL 194 / M139) (Aspergillus nidulans)).